A 73-amino-acid chain; its full sequence is Sec-independent protein translocase protein TatA (73 aa).

Residues 1 to 21 (MFGLGAPELILILILALIIFG) traverse the membrane as a helical segment. Positions 52 to 73 (EAAKIDDGNNNSDKEKATRQAS) are disordered.

It belongs to the TatA/E family. As to quaternary structure, forms a complex with TatC.

It localises to the cell membrane. Part of the twin-arginine translocation (Tat) system that transports large folded proteins containing a characteristic twin-arginine motif in their signal peptide across membranes. TatA could form the protein-conducting channel of the Tat system. This Moorella thermoacetica (strain ATCC 39073 / JCM 9320) protein is Sec-independent protein translocase protein TatA.